Reading from the N-terminus, the 239-residue chain is Probable transcriptional regulatory protein BBR47_14810 (239 aa).

It belongs to the TACO1 family. YeeN subfamily.

It is found in the cytoplasm. The sequence is that of Probable transcriptional regulatory protein BBR47_14810 from Brevibacillus brevis (strain 47 / JCM 6285 / NBRC 100599).